A 525-amino-acid chain; its full sequence is MTENIHKHRILILDFGSQYTQLVARRVRELGVYCELWAWDVTEAQIREFNPSGIILSGGPESTTEENSPRAPQYVFEAGVPVFGVCYGMQTMAMQLGGHVEGSNEREFGYAQVEVVNDSALVRGIEDSLTADGKPLLDVWMSHGDKVTAIPSDFVTVASTDNCPFAIMANEEKRFYGVQFHPEVTHTRQGMRMLERFVRDICQCEALWTPAKIIDDAVERIRQQVGDDKVILGLSGGVDSSVTAMLLHRAIGKNLTCVFVDNGLLRLNEAQQVMDMFGDHFGLNIVHVEGEQRFLDALKGENDPEAKRKIIGRVFVEVFDEEALKLDDVKWLAQGTIYPDVIESAASATGKAHVIKSHHNVGGLPKEMKMGLVEPLRELFKDEVRKIGLELGLPYDMLYRHPFPGPGLGVRVLGEVKKEYCDLLRRADAIFIEELHKADLYNKVSQAFTVFLPVRSVGVMGDGRKYDWVVSLRAVETIDFMTAHWAHLPYDFLGRVSNRIINEVNGISRVVYDISGKPPATIEWE.

The Glutamine amidotransferase type-1 domain maps to Arg-9–Leu-207. Cys-86 acts as the Nucleophile in catalysis. Residues His-181 and Glu-183 contribute to the active site. Residues Trp-208–Arg-400 enclose the GMPS ATP-PPase domain. ATP is bound at residue Ser-235 to Ser-241.

Homodimer.

It catalyses the reaction XMP + L-glutamine + ATP + H2O = GMP + L-glutamate + AMP + diphosphate + 2 H(+). The protein operates within purine metabolism; GMP biosynthesis; GMP from XMP (L-Gln route): step 1/1. In terms of biological role, catalyzes the synthesis of GMP from XMP. The polypeptide is GMP synthase [glutamine-hydrolyzing] (Klebsiella pneumoniae (strain 342)).